A 320-amino-acid polypeptide reads, in one-letter code: Glutathione synthetase (320 aa).

Positions K130 to E315 constitute an ATP-grasp domain. An ATP-binding site is contributed by W156–G212. Mg(2+)-binding residues include E286 and N288.

The protein belongs to the prokaryotic GSH synthase family. Mg(2+) is required as a cofactor. It depends on Mn(2+) as a cofactor.

The catalysed reaction is gamma-L-glutamyl-L-cysteine + glycine + ATP = glutathione + ADP + phosphate + H(+). It participates in sulfur metabolism; glutathione biosynthesis; glutathione from L-cysteine and L-glutamate: step 2/2. This chain is Glutathione synthetase, found in Buchnera aphidicola subsp. Acyrthosiphon pisum (strain APS) (Acyrthosiphon pisum symbiotic bacterium).